The chain runs to 283 residues: 1-acyl-sn-glycerol-3-phosphate acyltransferase alpha (283 aa).

The N-terminal stretch at 1-26 (MDLWPGAWMLLLLLFLLLLFLLPTLW) is a signal peptide. Residues 27-37 (FCSPSAKYFFK) lie on the Lumenal side of the membrane. The chain crosses the membrane as a helical span at residues 38–58 (MAFYNGWILFLAVLAIPVCAV). The Cytoplasmic segment spans residues 59 to 127 (RGRNVENMKI…PGRCVPIAKR (69 aa)). An HXXXXD motif motif is present at residues 104 to 109 (HQSSLD). Residues 128–148 (ELLWAGSAGLACWLAGVIFID) form a helical membrane-spanning segment. Over 149–283 (RKRTGDAISV…DYLKKPGGGG (135 aa)) the chain is Lumenal. An EGTR motif motif is present at residues 178 to 181 (EGTR).

This sequence belongs to the 1-acyl-sn-glycerol-3-phosphate acyltransferase family. In terms of tissue distribution, widely expressed. Expressed in adipose tissue and at high levels in testis and pancreas. Expressed at lower levels in tissues such as heart, brain, placenta, kidney, lung, spleen, thymus, prostate, ovary, intestine, colon, leukocyte and liver.

The protein localises to the endoplasmic reticulum membrane. The catalysed reaction is a 1-acyl-sn-glycero-3-phosphate + an acyl-CoA = a 1,2-diacyl-sn-glycero-3-phosphate + CoA. The enzyme catalyses 1-(9Z-octadecenoyl)-sn-glycero-3-phosphate + (9Z)-octadecenoyl-CoA = 1,2-di-(9Z-octadecenoyl)-sn-glycero-3-phosphate + CoA. It catalyses the reaction 1-(9Z-octadecenoyl)-sn-glycero-3-phosphate + hexadecanoyl-CoA = 1-(9Z)-octadecenoyl-2-hexadecanoyl-sn-glycero-3-phosphate + CoA. It carries out the reaction heptadecanoyl-CoA + 1-(9Z-octadecenoyl)-sn-glycero-3-phosphate = 1-(9Z)-octadecenoyl-2-heptadecanoyl-sn-glycero-3-phosphate + CoA. The catalysed reaction is 1-(9Z-octadecenoyl)-sn-glycero-3-phosphate + octadecanoyl-CoA = 1-(9Z-octadecenoyl)-2-octadecanoyl-sn-glycero-3-phosphate + CoA. The enzyme catalyses 1-(9Z-octadecenoyl)-sn-glycero-3-phosphate + (9Z,12Z)-octadecadienoyl-CoA = 1-(9Z)-octadecenoyl-2-(9Z,12Z)-octadecadienoyl-sn-glycero-3-phosphate + CoA. It catalyses the reaction 1-(9Z-octadecenoyl)-sn-glycero-3-phosphate + tetradecanoyl-CoA = 1-(9Z)-octadecenoyl-2-tetradecanoyl-sn-glycero-3-phosphate + CoA. It carries out the reaction pentadecanoyl-CoA + 1-(9Z-octadecenoyl)-sn-glycero-3-phosphate = 1-(9Z)-octadecenoyl-2-pentadecanoyl-sn-glycero-3-phosphate + CoA. The catalysed reaction is 1-hexadecanoyl-sn-glycero-3-phosphate + (9Z)-octadecenoyl-CoA = 1-hexadecanoyl-2-(9Z-octadecenoyl)-sn-glycero-3-phosphate + CoA. The enzyme catalyses 1-(9Z,12Z,15Z)-octadecatrienoyl-sn-glycero-3-phosphate + (9Z)-octadecenoyl-CoA = 1-(9Z,12Z,15Z)-octadecatrienoyl-2-(9Z)-octadecenoyl-sn-glycero-3-phosphate + CoA. It catalyses the reaction 1-(6Z,9Z,12Z-octadecatrienoyl)-sn-glycero-3-phosphate + (9Z)-octadecenoyl-CoA = (6Z,9Z,12Z)-octadecatrienoyl-2-(9Z)-octadecenoyl-sn-glycero-3-phosphate + CoA. It carries out the reaction 1-eicosanoyl-sn-glycero-3-phosphate + (9Z)-octadecenoyl-CoA = 1-eicosanoyl-2-(9Z)-octadecenoyl-sn-glycero-3-phosphate + CoA. The catalysed reaction is 1-tetradecanoyl-sn-glycerol 3-phosphate + (9Z)-octadecenoyl-CoA = 1-tetradecanoyl-2-(9Z)-octadecenoyl-sn-glycero-3-phosphate + CoA. The enzyme catalyses 1-(9Z-octadecenoyl)-sn-glycero-3-phosphate + (5Z,8Z,11Z,14Z)-eicosatetraenoyl-CoA = 1-(9Z)-octadecenoyl-2-(5Z,8Z,11Z,14Z)-eicosatetraenoyl-sn-glycero-3-phosphate + CoA. It catalyses the reaction 1-(9Z-octadecenoyl)-sn-glycero-3-phosphate + dodecanoyl-CoA = 1-(9Z)-octadecenoyl-2-dodecanoyl-sn-glycero-3-phosphate + CoA. It carries out the reaction (6Z)-octadecenoyl-CoA + 1-(9Z-octadecenoyl)-sn-glycero-3-phosphate = 1-(9Z)-octadecenoyl-2-(6Z)-octadecenoyl-sn-glycero-3-phosphate + CoA. The catalysed reaction is (11Z)-octadecenoyl-CoA + 1-(9Z-octadecenoyl)-sn-glycero-3-phosphate = 1-(9Z)-octadecenoyl-2-(11Z)-octadecenoyl-sn-glycero-3-phosphate + CoA. The enzyme catalyses (9Z)-hexadecenoyl-CoA + 1-(9Z-octadecenoyl)-sn-glycero-3-phosphate = 1-(9Z-octadecenoyl)-2-(9Z-hexadecenoyl)-sn-glycero-3-phosphate + CoA. It participates in phospholipid metabolism; CDP-diacylglycerol biosynthesis; CDP-diacylglycerol from sn-glycerol 3-phosphate: step 2/3. Converts 1-acyl-sn-glycerol-3-phosphate (lysophosphatidic acid or LPA) into 1,2-diacyl-sn-glycerol-3-phosphate (phosphatidic acid or PA) by incorporating an acyl moiety at the sn-2 position of the glycerol backbone. In Homo sapiens (Human), this protein is 1-acyl-sn-glycerol-3-phosphate acyltransferase alpha (AGPAT1).